Consider the following 456-residue polypeptide: Perilipin-5 (456 aa).

A disordered region spans residues 1–20 (MSEDEAAQAPGPSLSEQDQQ). Residues 1 to 108 (MSEDEAAQAP…KLEEKLPFLQ (108 aa)) are interaction with LIPE. The tract at residues 1-173 (MSEDEAAQAP…HFLPMTEEEL (173 aa)) is essential for lipid droplet targeting. 3 positions are modified to phosphoserine: Ser2, Ser148, and Ser324. The interaction with PNPLA2 and ABHD5 stretch occupies residues 185-456 (VGSVEEQRKH…KHTLMPELDF (272 aa)). A disordered region spans residues 420 to 456 (AWQAQHGEGTVLSGNIPEEEPEPPSRPKHTLMPELDF). The tract at residues 438 to 456 (EEPEPPSRPKHTLMPELDF) is recruits mitochondria at the lipid droplet surface.

It belongs to the perilipin family. In terms of assembly, homooligomer. Interacts with PNPLA2; prevents interaction of PNPLA2 with ABHD5. Interacts with ABHD5; targets ABHD5 to lipid droplets and promotes interaction of ABHD5 with PNPLA2. Interacts with LIPE. In terms of processing, phosphorylated by PKA. Phosphorylated on serine in skeletal muscle at rest or upon lipolytic stimulation.

The protein resides in the lipid droplet. Its subcellular location is the cytoplasm. It is found in the mitochondrion. Its function is as follows. Lipid droplet-associated protein that maintains the balance between lipogenesis and lipolysis and also regulates fatty acid oxidation in oxidative tissues. Recruits mitochondria to the surface of lipid droplets and is involved in lipid droplet homeostasis by regulating both the storage of fatty acids in the form of triglycerides and the release of fatty acids for mitochondrial fatty acid oxidation. In lipid droplet triacylglycerol hydrolysis, plays a role as a scaffolding protein for three major key lipolytic players: ABHD5, PNPLA2 and LIPE. Reduces the triacylglycerol hydrolase activity of PNPLA2 by recruiting and sequestering PNPLA2 to lipid droplets. Phosphorylation by PKA enables lipolysis probably by promoting release of ABHD5 from the perilipin scaffold and by facilitating interaction of ABHD5 with PNPLA2. Also increases lipolysis through interaction with LIPE and upon PKA-mediated phosphorylation of LIPE. This chain is Perilipin-5 (Plin5), found in Ovis aries (Sheep).